The following is a 395-amino-acid chain: Phosphoprotein (395 aa).

The segment at 178 to 217 is disordered; the sequence is NGVLHGSEIRSKSSSGVIPGVPQSRPQLASSPAHADPAPA. Low complexity predominate over residues 206–217; the sequence is ASSPAHADPAPA. Residues 220 to 283 are multimerization; it reads ENVKEIIELL…ITTIKIMDPS (64 aa).

It belongs to the rubulavirus/avulavirus P protein family. As to quaternary structure, homotetramer. Interacts (via multimerization domain) with polymerase L; this interaction forms the polymerase L-P complex. Interacts (via N-terminus) with N0 (via Ncore); this interaction allows P to chaperon N0 to avoid N polymerization before encapsidation. Interacts (via C-terminus) with N-RNA template; this interaction positions the polymerase on the template for both transcription and replication. Interacts with host ARHGAP26; this interaction promotes host RHOA activation. Interacts with host KPNA1 and KPNA6.

It localises to the host cytoplasm. Essential cofactor of the RNA polymerase L that plays a central role in the transcription and replication by forming the polymerase complex with RNA polymerase L and recruiting L to the genomic N-RNA template for RNA synthesis. Also plays a central role in the encapsidation of nascent RNA chains by forming the encapsidation complex with the nucleocapsid protein N (N-P complex). Acts as a chaperone for newly synthesized free N protein, so-called N0, allowing encapsidation of nascent RNA chains during replication. The nucleoprotein protein N prevents excessive phosphorylation of P, which leads to down-regulation of viral transcription/ replication. Participates, together with N, in the formation of viral factories (viroplasms), which are large inclusions in the host cytoplasm where replication takes place. Also plays a role in viral growth by promoting host RHOA activation and thus actin formation via ARHGAP26 inhibition. In Homo sapiens (Human), this protein is Phosphoprotein (P/V).